We begin with the raw amino-acid sequence, 432 residues long: Adenylosuccinate synthetase (432 aa).

Residues 13-19 and 41-43 contribute to the GTP site; these read GDEGKGK and GHT. The active-site Proton acceptor is the aspartate 14. Mg(2+) is bound by residues aspartate 14 and glycine 41. IMP is bound by residues 14 to 17, 39 to 42, threonine 130, arginine 144, glutamine 225, threonine 240, and arginine 304; these read DEGK and NAGH. Histidine 42 serves as the catalytic Proton donor. 300–306 provides a ligand contact to substrate; sequence ATTGRRR. GTP-binding positions include arginine 306, 332–334, and 415–417; these read KLD and STG.

This sequence belongs to the adenylosuccinate synthetase family. As to quaternary structure, homodimer. Mg(2+) is required as a cofactor.

Its subcellular location is the cytoplasm. It carries out the reaction IMP + L-aspartate + GTP = N(6)-(1,2-dicarboxyethyl)-AMP + GDP + phosphate + 2 H(+). It participates in purine metabolism; AMP biosynthesis via de novo pathway; AMP from IMP: step 1/2. Its function is as follows. Plays an important role in the de novo pathway of purine nucleotide biosynthesis. Catalyzes the first committed step in the biosynthesis of AMP from IMP. The chain is Adenylosuccinate synthetase from Serratia proteamaculans (strain 568).